The following is a 501-amino-acid chain: Ribonuclease Y (501 aa).

A helical transmembrane segment spans residues Leu7–Leu27. Positions Val190–Asp256 constitute a KH domain. The HD domain maps to Val316 to Gly409.

It belongs to the RNase Y family.

It is found in the cell membrane. Its function is as follows. Endoribonuclease that initiates mRNA decay. In Thermobifida fusca (strain YX), this protein is Ribonuclease Y.